The primary structure comprises 111 residues: MAKVYANANKVAARHVDVRKRVKEERDGVTRRARTNLARANKTTRITKEGYFPASIEEVDGDVDFHTVLHAPNAFALEFGHAPSGFFAGTDTKPPDPEYILTRAAIGGTVS.

The sequence is that of Gene 21 protein (21) from Mycobacterium phage D29 (Mycobacteriophage D29).